Here is a 467-residue protein sequence, read N- to C-terminus: Geranylgeranyl diphosphate reductase, chloroplastic (467 aa).

The N-terminal 43 residues, 1-43, are a transit peptide targeting the chloroplast; sequence MATTVTLKSFTGLRQSSTEQTNFVSHVPSSLSLPQRRTSLRVT.

It belongs to the geranylgeranyl reductase family. ChlP subfamily. In terms of assembly, part of the FLU-containing chloroplast membrane complex composed of FLU, CRD1, PORB, PORC, CHLP and HEMA1.

It localises to the plastid. Its subcellular location is the chloroplast membrane. The catalysed reaction is phytyl diphosphate + 3 NADP(+) = geranylgeranyl diphosphate + 3 NADPH + 3 H(+). The protein operates within porphyrin-containing compound metabolism; chlorophyll biosynthesis. It participates in cofactor biosynthesis; tocopherol biosynthesis. Functionally, catalyzes the reduction of geranylgeranyl diphosphate to phytyl diphosphate, providing phytol for both tocopherol and chlorophyll synthesis. This chain is Geranylgeranyl diphosphate reductase, chloroplastic (CHLP), found in Arabidopsis thaliana (Mouse-ear cress).